The chain runs to 127 residues: Apolipoprotein C-IV (127 aa).

Residues 1-27 (MSLLRNRLQALPALCLCVLVLACIGAC) form the signal peptide. N-linked (GlcNAc...) asparagine glycosylation is present at Asn63.

Belongs to the apolipoprotein C4 family. Expressed by the liver and secreted in plasma.

It localises to the secreted. May participate in lipoprotein metabolism. This chain is Apolipoprotein C-IV (APOC4), found in Homo sapiens (Human).